A 357-amino-acid polypeptide reads, in one-letter code: 3-isopropylmalate dehydrogenase (357 aa).

76 to 89 provides a ligand contact to NAD(+); it reads GPKWDALDSNIRPE. 4 residues coordinate substrate: Arg96, Arg106, Arg134, and Asp224. Residues Asp224, Asp248, and Asp252 each coordinate Mg(2+). 282–294 is a binding site for NAD(+); it reads GSAPDIAGQGVAN.

This sequence belongs to the isocitrate and isopropylmalate dehydrogenases family. LeuB type 1 subfamily. Homodimer. It depends on Mg(2+) as a cofactor. Mn(2+) serves as cofactor.

Its subcellular location is the cytoplasm. It carries out the reaction (2R,3S)-3-isopropylmalate + NAD(+) = 4-methyl-2-oxopentanoate + CO2 + NADH. Its pathway is amino-acid biosynthesis; L-leucine biosynthesis; L-leucine from 3-methyl-2-oxobutanoate: step 3/4. In terms of biological role, catalyzes the oxidation of 3-carboxy-2-hydroxy-4-methylpentanoate (3-isopropylmalate) to 3-carboxy-4-methyl-2-oxopentanoate. The product decarboxylates to 4-methyl-2 oxopentanoate. This Saccharophagus degradans (strain 2-40 / ATCC 43961 / DSM 17024) protein is 3-isopropylmalate dehydrogenase.